A 187-amino-acid chain; its full sequence is ATP synthase subunit delta (187 aa).

This sequence belongs to the ATPase delta chain family. As to quaternary structure, F-type ATPases have 2 components, F(1) - the catalytic core - and F(0) - the membrane proton channel. F(1) has five subunits: alpha(3), beta(3), gamma(1), delta(1), epsilon(1). F(0) has three main subunits: a(1), b(2) and c(10-14). The alpha and beta chains form an alternating ring which encloses part of the gamma chain. F(1) is attached to F(0) by a central stalk formed by the gamma and epsilon chains, while a peripheral stalk is formed by the delta and b chains.

It is found in the cell inner membrane. In terms of biological role, f(1)F(0) ATP synthase produces ATP from ADP in the presence of a proton or sodium gradient. F-type ATPases consist of two structural domains, F(1) containing the extramembraneous catalytic core and F(0) containing the membrane proton channel, linked together by a central stalk and a peripheral stalk. During catalysis, ATP synthesis in the catalytic domain of F(1) is coupled via a rotary mechanism of the central stalk subunits to proton translocation. Its function is as follows. This protein is part of the stalk that links CF(0) to CF(1). It either transmits conformational changes from CF(0) to CF(1) or is implicated in proton conduction. The sequence is that of ATP synthase subunit delta from Leptospira biflexa serovar Patoc (strain Patoc 1 / Ames).